Reading from the N-terminus, the 446-residue chain is MREVISVHVGQAGVQIGNACWELYTLEHGLSPDGRLMDDSPSKHDSGSTFFSETGQGKHVPRRLYVDLEPGVIDDVKNGPYRSLFHPETMITGKEDAANNYARGHYTVGKELIDPVMDKLRRLADNCSGRQGLFVFHSFGGGTGSGFGALLLERLSTDYGKKAKLEFCVYPAPQLSSSVVEPYNSLLTTHTTLEHSDCSFMVDNEAIYDICKKNLGVAQPGFTNLNRLIAQVVSSITASLRFDGSLNVDLNEFQTNLVPFPRIHFPLASYAPLLSAPRRQHEQNSVEEMTFSCFESGNQMVKCDAKDGKYMACCLLYRGDVVPKDTQAAVASIKTKRTIQFVDWCPTGFKLGVCNEAPATVPGGDLAKVPRSLCMLSNTTAIAAAWNRLDYKFDLMYRKRAFVHWYVGEAMEEGEFSEAREDLAALEKDYEEVGTDSADAEEEGEY.

Q11 lines the GTP pocket. The interval 34-55 is disordered; that stretch reads GRLMDDSPSKHDSGSTFFSETG. Over residues 35-46 the composition is skewed to basic and acidic residues; it reads RLMDDSPSKHDS. Residues E69, S138, G142, T143, S177, N204, and N226 each contribute to the GTP site. E69 lines the Mg(2+) pocket. The active site involves E252.

It belongs to the tubulin family. Dimer of alpha and beta chains. A typical microtubule is a hollow water-filled tube with an outer diameter of 25 nm and an inner diameter of 15 nM. Alpha-beta heterodimers associate head-to-tail to form protofilaments running lengthwise along the microtubule wall with the beta-tubulin subunit facing the microtubule plus end conferring a structural polarity. Microtubules usually have 13 protofilaments but different protofilament numbers can be found in some organisms and specialized cells. Mg(2+) is required as a cofactor.

It localises to the cytoplasm. It is found in the cytoskeleton. The enzyme catalyses GTP + H2O = GDP + phosphate + H(+). Its function is as follows. Tubulin is the major constituent of microtubules, a cylinder consisting of laterally associated linear protofilaments composed of alpha- and beta-tubulin heterodimers. Microtubules grow by the addition of GTP-tubulin dimers to the microtubule end, where a stabilizing cap forms. Below the cap, tubulin dimers are in GDP-bound state, owing to GTPase activity of alpha-tubulin. The sequence is that of Tubulin alpha-1B chain (TUB-1B) from Schizophyllum commune (Split gill fungus).